Here is a 404-residue protein sequence, read N- to C-terminus: Cysteine desulfurase IscS (404 aa).

Residues 75–76, asparagine 155, glutamine 183, and 203–205 each bind pyridoxal 5'-phosphate; these read AT and SGH. Lysine 206 is modified (N6-(pyridoxal phosphate)lysine). Pyridoxal 5'-phosphate is bound at residue threonine 243. The Cysteine persulfide intermediate role is filled by cysteine 328. Cysteine 328 is a binding site for [2Fe-2S] cluster.

Belongs to the class-V pyridoxal-phosphate-dependent aminotransferase family. NifS/IscS subfamily. Homodimer. Forms a heterotetramer with IscU, interacts with other sulfur acceptors. Requires pyridoxal 5'-phosphate as cofactor.

It is found in the cytoplasm. The enzyme catalyses (sulfur carrier)-H + L-cysteine = (sulfur carrier)-SH + L-alanine. It participates in cofactor biosynthesis; iron-sulfur cluster biosynthesis. Its function is as follows. Master enzyme that delivers sulfur to a number of partners involved in Fe-S cluster assembly, tRNA modification or cofactor biosynthesis. Catalyzes the removal of elemental sulfur and selenium atoms from cysteine and selenocysteine to produce alanine. Functions as a sulfur delivery protein for Fe-S cluster synthesis onto IscU, an Fe-S scaffold assembly protein, as well as other S acceptor proteins. Also functions as a selenium delivery protein in the pathway for the biosynthesis of selenophosphate. This is Cysteine desulfurase IscS from Salmonella typhi.